The primary structure comprises 79 residues: Acyl carrier protein (79 aa).

Residues 1–76 form the Carrier domain; that stretch reads MEVFEEVRDV…DVVTYIENLN (76 aa). O-(pantetheine 4'-phosphoryl)serine is present on Ser36.

This sequence belongs to the acyl carrier protein (ACP) family. 4'-phosphopantetheine is transferred from CoA to a specific serine of apo-ACP by AcpS. This modification is essential for activity because fatty acids are bound in thioester linkage to the sulfhydryl of the prosthetic group.

The protein resides in the cytoplasm. The protein operates within lipid metabolism; fatty acid biosynthesis. In terms of biological role, carrier of the growing fatty acid chain in fatty acid biosynthesis. This Campylobacter hominis (strain ATCC BAA-381 / DSM 21671 / CCUG 45161 / LMG 19568 / NCTC 13146 / CH001A) protein is Acyl carrier protein.